The sequence spans 276 residues: NAD kinase (276 aa).

The Proton acceptor role is filled by Asp66. NAD(+) contacts are provided by residues 66-67 (DG), 139-140 (ND), Asp168, 179-184 (TAYNIS), and Gln234.

Belongs to the NAD kinase family. A divalent metal cation is required as a cofactor.

The protein localises to the cytoplasm. The catalysed reaction is NAD(+) + ATP = ADP + NADP(+) + H(+). Involved in the regulation of the intracellular balance of NAD and NADP, and is a key enzyme in the biosynthesis of NADP. Catalyzes specifically the phosphorylation on 2'-hydroxyl of the adenosine moiety of NAD to yield NADP. This Campylobacter lari (strain RM2100 / D67 / ATCC BAA-1060) protein is NAD kinase.